The following is a 254-amino-acid chain: MRIDILTLFPEMFQGPFNHSILKRAQENNLLQIDTINIRDFSQNKHHTVDDTPYGGGAGMVMGPEPLFECFDHLKAKNAGQVGRVIMMCPQGEPFTQEYAKELAREENLVIVCGHYEGIDERVREVLVTDEISIGDYVLTGGELPAMVVVDAVARMIPGVLGETASAEEDSFYNGLLEHPHFTKPREYRGYEVPEILLSGHHGNIRKWRRRQSLLRTLERRPELLKDVELSKEDKKVLLELQNLLLSLNLKQMK.

S-adenosyl-L-methionine-binding positions include Gly-114 and 134–139 (IGDYVL).

The protein belongs to the RNA methyltransferase TrmD family. In terms of assembly, homodimer.

Its subcellular location is the cytoplasm. The enzyme catalyses guanosine(37) in tRNA + S-adenosyl-L-methionine = N(1)-methylguanosine(37) in tRNA + S-adenosyl-L-homocysteine + H(+). Specifically methylates guanosine-37 in various tRNAs. The sequence is that of tRNA (guanine-N(1)-)-methyltransferase from Desulforamulus reducens (strain ATCC BAA-1160 / DSM 100696 / MI-1) (Desulfotomaculum reducens).